A 570-amino-acid polypeptide reads, in one-letter code: Glycine--tRNA ligase (570 aa).

Residues Arg-99 and Glu-165 each coordinate substrate. ATP-binding positions include 197–199 (RNE), 207–212 (LRLREF), 324–325 (EC), and 443–446 (GIDR). A substrate-binding site is contributed by 212 to 216 (FTQAE). 439–443 (EPSFG) contributes to the substrate binding site.

This sequence belongs to the class-II aminoacyl-tRNA synthetase family.

Its subcellular location is the cytoplasm. It carries out the reaction tRNA(Gly) + glycine + ATP = glycyl-tRNA(Gly) + AMP + diphosphate. Functionally, catalyzes the attachment of glycine to tRNA(Gly). The sequence is that of Glycine--tRNA ligase from Thermococcus kodakarensis (strain ATCC BAA-918 / JCM 12380 / KOD1) (Pyrococcus kodakaraensis (strain KOD1)).